The sequence spans 207 residues: Small ribosomal subunit protein uS5 (207 aa).

The disordered stretch occupies residues 1 to 51 (MTDTPTKQEITSKNDKVPGAIPGEQKKNNRNNDRKRNRRGDSKNLERDSDW). The segment covering 24 to 51 (EQKKNNRNNDRKRNRRGDSKNLERDSDW) has biased composition (basic and acidic residues). The region spanning 51–114 (WQERVVQIRR…SDGKKNLVRV (64 aa)) is the S5 DRBM domain.

Belongs to the universal ribosomal protein uS5 family. Part of the 30S ribosomal subunit. Contacts proteins S4 and S8.

In terms of biological role, with S4 and S12 plays an important role in translational accuracy. Its function is as follows. Located at the back of the 30S subunit body where it stabilizes the conformation of the head with respect to the body. This chain is Small ribosomal subunit protein uS5, found in Prochlorococcus marinus (strain MIT 9312).